The following is a 283-amino-acid chain: uncharacterized protein (283 aa).

Transmembrane regions (helical) follow at residues 24 to 44 (LFGY…GMFI), 64 to 84 (TIAG…TLIA), and 96 to 116 (VIAI…GSLS).

It belongs to the MscS (TC 1.A.23) family.

It localises to the cell membrane. This is an uncharacterized protein from Buchnera aphidicola subsp. Schizaphis graminum (strain Sg).